The primary structure comprises 68 residues: Small ribosomal subunit protein bS21 (68 aa).

Belongs to the bacterial ribosomal protein bS21 family.

This is Small ribosomal subunit protein bS21 from Paracoccus denitrificans (strain Pd 1222).